The chain runs to 193 residues: Imidazoleglycerol-phosphate dehydratase (193 aa).

The protein belongs to the imidazoleglycerol-phosphate dehydratase family.

The protein resides in the cytoplasm. The catalysed reaction is D-erythro-1-(imidazol-4-yl)glycerol 3-phosphate = 3-(imidazol-4-yl)-2-oxopropyl phosphate + H2O. It functions in the pathway amino-acid biosynthesis; L-histidine biosynthesis; L-histidine from 5-phospho-alpha-D-ribose 1-diphosphate: step 6/9. In Methanospirillum hungatei JF-1 (strain ATCC 27890 / DSM 864 / NBRC 100397 / JF-1), this protein is Imidazoleglycerol-phosphate dehydratase.